The following is a 261-amino-acid chain: Carnitinyl-CoA dehydratase (261 aa).

The Nucleophile role is filled by Glu-111. The Proton acceptor role is filled by Glu-131.

It belongs to the enoyl-CoA hydratase/isomerase family.

It catalyses the reaction (R)-carnitinyl-CoA = crotonobetainyl-CoA + H2O. The protein operates within amine and polyamine metabolism; carnitine metabolism. Catalyzes the reversible dehydration of L-carnitinyl-CoA to crotonobetainyl-CoA. This is Carnitinyl-CoA dehydratase from Citrobacter koseri (strain ATCC BAA-895 / CDC 4225-83 / SGSC4696).